The following is a 138-amino-acid chain: Putative pre-16S rRNA nuclease (138 aa).

This sequence belongs to the YqgF nuclease family.

It localises to the cytoplasm. Could be a nuclease involved in processing of the 5'-end of pre-16S rRNA. The chain is Putative pre-16S rRNA nuclease from Cronobacter sakazakii (strain ATCC BAA-894) (Enterobacter sakazakii).